Consider the following 108-residue polypeptide: Nucleoid-associated protein BP1550 (108 aa).

The tract at residues 87–108 is disordered; that stretch reads SQEKMASVTAGMPLPPGMKLPF. Pro residues predominate over residues 99–108; the sequence is PLPPGMKLPF.

The protein belongs to the YbaB/EbfC family. As to quaternary structure, homodimer.

It localises to the cytoplasm. Its subcellular location is the nucleoid. Binds to DNA and alters its conformation. May be involved in regulation of gene expression, nucleoid organization and DNA protection. The chain is Nucleoid-associated protein BP1550 from Bordetella pertussis (strain Tohama I / ATCC BAA-589 / NCTC 13251).